A 122-amino-acid polypeptide reads, in one-letter code: Large ribosomal subunit protein uL18 (122 aa).

Residues 1-19 (MSKLSRKQQTQKRHKRLRR) are compositionally biased toward basic residues. The interval 1–27 (MSKLSRKQQTQKRHKRLRRNLSGTESR) is disordered.

This sequence belongs to the universal ribosomal protein uL18 family. Part of the 50S ribosomal subunit; part of the 5S rRNA/L5/L18/L25 subcomplex. Contacts the 5S and 23S rRNAs.

This is one of the proteins that bind and probably mediate the attachment of the 5S RNA into the large ribosomal subunit, where it forms part of the central protuberance. This chain is Large ribosomal subunit protein uL18, found in Prochlorococcus marinus (strain NATL1A).